The primary structure comprises 200 residues: NAD(P)H dehydrogenase (quinone) (200 aa).

The Flavodoxin-like domain occupies V4–V191. FMN is bound by residues S10–I15 and T79–F81. An NAD(+)-binding site is contributed by Y12. W99 contacts substrate. Residues S114 to G120 and H135 each bind FMN.

This sequence belongs to the WrbA family. FMN serves as cofactor.

The enzyme catalyses a quinone + NADH + H(+) = a quinol + NAD(+). The catalysed reaction is a quinone + NADPH + H(+) = a quinol + NADP(+). The sequence is that of NAD(P)H dehydrogenase (quinone) from Rhodospirillum centenum (strain ATCC 51521 / SW).